Here is a 134-residue protein sequence, read N- to C-terminus: Cytochrome c-type biogenesis protein CcmE (134 aa).

The Cytoplasmic portion of the chain corresponds to 1–7; the sequence is MKRKYRR. A helical; Signal-anchor for type II membrane protein membrane pass occupies residues 8 to 28; it reads LFVVIITLSIFAGSVVLVLGK. Residues 29 to 134 lie on the Periplasmic side of the membrane; sequence LKNNVSFFYT…MPNKYKTNDL (106 aa). Heme-binding residues include His120 and Tyr124.

This sequence belongs to the CcmE/CycJ family.

It is found in the cell inner membrane. Heme chaperone required for the biogenesis of c-type cytochromes. Transiently binds heme delivered by CcmC and transfers the heme to apo-cytochromes in a process facilitated by CcmF and CcmH. This Ehrlichia ruminantium (strain Welgevonden) protein is Cytochrome c-type biogenesis protein CcmE.